Reading from the N-terminus, the 433-residue chain is MSSDDRHLGSSCGSFIKTEPSSPSSGIDALSHHSPSGSSDASGGFGLALGTHANGLDSPPMFAGAGLGGTPCRKSYEDCASGIMEDSAIKCEYMLNAIPKRLCLVCGDIASGYHYGVASCEACKAFFKRTIQGNIEYSCPATNECEITKRRRKSCQACRFMKCLKVGMLKEGVRLDRVRGGRQKYKRRLDSESSPYLSLQISPPAKKPLTKIVSYLLVAEPDKLYAMPPPGMPEGDIKALTTLCDLADRELVVIIGWAKHIPGFSSLSLGDQMSLLQSAWMEILILGIVYRSLPYDDKLVYAEDYIMDEEHSRLAGLLELYRAILQLVRRYKKLKVEKEEFVTLKALALANSDSMYIEDLEAVQKLQDLLHEALQDYELSQRHEEPWRTGKLLLTLPLLRQTAAKAVQHFYSVKLQGKVPMHKLFLEMLEAKV.

The interval 1-38 is disordered; it reads MSSDDRHLGSSCGSFIKTEPSSPSSGIDALSHHSPSGS. Over residues 28–38 the composition is skewed to low complexity; that stretch reads DALSHHSPSGS. The tract at residues 93–211 is interaction with NANOG; it reads YMLNAIPKRL…SPPAKKPLTK (119 aa). The nuclear receptor DNA-binding region spans 100-186; the sequence is KRLCLVCGDI…RVRGGRQKYK (87 aa). 2 NR C4-type zinc fingers span residues 103–123 and 139–163; these read CLVCGDIASGYHYGVASCEAC and CPATNECEITKRRRKSCQACRFMKC. An essential for ESRRB transcriptional activity and interaction with NCOA3 region spans residues 203–433; that stretch reads PPAKKPLTKI…LFLEMLEAKV (231 aa). An NR LBD domain is found at 208–432; sequence PLTKIVSYLL…KLFLEMLEAK (225 aa).

The protein belongs to the nuclear hormone receptor family. NR3 subfamily. As to quaternary structure, binds DNA as a monomer. Interacts with NR0B1; represses ESRRB activity at the GATA6 promoter. Interacts with NANOG; reciprocally modulates their transcriptional activities and activates POU5F1 expression. Interacts with NCOA3; mediates the interaction between ESRRB and RNA polymerase II complexes and allows NCOA3 corecruitment to ESRRB, KLF4, NANOG, and SOX2 enhancer regions to trigger ESRRB-dependent gene activation involved in self-renewal and pluripotency. Interacts with KDM1A; co-occupes the core set of ESRRB targets including ELF5 and EOMES. Interacts with the multiprotein complex Integrator, at least composed of INTS1, INTS2, INTS3, INTS4, INTS5, INTS6, INTS7, INTS8, INTS9/RC74, INTS10, INTS11/CPSF3L and INTS12; ESRRB is probably not a core component of the integrator complex and associates to integrator via its interaction with INTS1 and INTS9; attracts the transcriptional machinery. Interacts with JARID2. Interacts with POU5F1; recruits ESRRB near the POU5F1-SOX2 element in the NANOG proximal promoter leading to activation of NANOG expression; the interaction is DNA independent. Interacts with NFE2L2; represses NFE2L2 transcriptional activity. Isoform 1 interacts with ESR1. In terms of processing, acetylated by PCAF/KAT2 (in vitro).

Its subcellular location is the nucleus. The protein resides in the cytoplasm. It localises to the chromosome. Its function is as follows. Transcription factor that binds a canonical ESRRB recognition (ERRE) sequence 5'TCAAGGTCA-3' localized on promoter and enhancer of targets genes regulating their expression or their transcription activity. Plays a role, in a LIF-independent manner, in maintainance of self-renewal and pluripotency of embryonic and trophoblast stem cells through different signaling pathways including FGF signaling pathway and Wnt signaling pathways. Involved in morula development (2-16 cells embryos) by acting as a regulator at the 8-cell stage. Upon FGF signaling pathway activation, interacts with KDM1A by directly binding to enhancer site of ELF5 and EOMES and activating their transcription leading to self-renewal of trophoblast stem cells. Also regulates expression of multiple rod-specific genes and is required for survival of this cell type. Plays a role as transcription factor activator of GATA6, NR0B1, POU5F1 and PERM1. Plays a role as transcription factor repressor of NFE2L2 transcriptional activity and ESR1 transcriptional activity. During mitosis remains bound to a subset of interphase target genes, including pluripotency regulators, through the canonical ESRRB recognition (ERRE) sequence, leading to their transcriptional activation in early G1 phase. Can coassemble on structured DNA elements with other transcription factors like SOX2, POU5F1, KDM1A and NCOA3 to trigger ESRRB-dependent gene activation. This mechanism, in the case of SOX2 corecruitment prevents the embryonic stem cells (ESCs) to epiblast stem cells (EpiSC) transition through positive regulation of NR0B1 that inhibits the EpiSC transcriptional program. Also plays a role inner ear development by controlling expression of ion channels and transporters and in early placentation. In terms of biological role, transcription factor that binds a canonical ESRRB recognition (ERRE) sequence 5'TCAAGGTCA-3' localized on promoter and enhancer of targets genes regulating their expression or their transcription activity. Positively regulates ESR1 transcriptional activity upon E2 stimulation. In Homo sapiens (Human), this protein is Steroid hormone receptor ERR2.